Consider the following 289-residue polypeptide: Delta-sarcoglycan (289 aa).

Over 1–35 the chain is Cytoplasmic; that stretch reads MPQEQYTHHRSTMPGSVGPQVYKVGIYGWRKRCLY. The helical; Signal-anchor for type II membrane protein transmembrane segment at 36-56 threads the bilayer; sequence FFVLLLMILILVNLAMTIWIL. Residues 57–289 lie on the Extracellular side of the membrane; that stretch reads KVMNFTIDGM…TCQINTSVCL (233 aa). N-linked (GlcNAc...) asparagine glycans are attached at residues Asn-60 and Asn-108. Cystine bridges form between Cys-263–Cys-288 and Cys-265–Cys-281. An N-linked (GlcNAc...) asparagine glycan is attached at Asn-284.

Belongs to the sarcoglycan beta/delta/gamma/zeta family. As to quaternary structure, interacts with FLNC and DAG1. Cross-link to form 2 major subcomplexes: one consisting of SGCB, SGCD and SGCG and the other consisting of SGCB and SGCD. The association between SGCB and SGCG is particularly strong while SGCA is loosely associated with the other sarcoglycans. Post-translationally, glycosylated. Disulfide bonds are present. As to expression, most strongly expressed in skeletal and cardiac muscle. Also detected in smooth muscle. Weak expression in brain and lung.

It is found in the cell membrane. It localises to the sarcolemma. The protein localises to the cytoplasm. Its subcellular location is the cytoskeleton. In terms of biological role, component of the sarcoglycan complex, a subcomplex of the dystrophin-glycoprotein complex which forms a link between the F-actin cytoskeleton and the extracellular matrix. The chain is Delta-sarcoglycan (SGCD) from Homo sapiens (Human).